A 33-amino-acid polypeptide reads, in one-letter code: Alpha-amanitin proprotein (33 aa).

Positions 1–10 are excised as a propeptide; that stretch reads MSDINATRLP. At Ile11 the chain carries (3R,4R)-4,5-dihydroxyisoleucine; in form alpha-amanitin. The residue at position 11 (Ile11) is a (3R,4S)-4-hydroxyisoleucine; in form gamma-amanitin. The segment at residues 11–18 is a cross-link (cyclopeptide (Ile-Pro)); the sequence is IWGIGCNP. The 2'-cysteinyl-6'-hydroxytryptophan sulfoxide (Trp-Cys) cross-link spans 12–16; the sequence is WGIGC. A 4-hydroxyproline modification is found at Pro18. Positions 19–33 are excised as a propeptide; that stretch reads SVGDEVTALLTSGEA.

It belongs to the MSDIN fungal toxin family. Post-translationally, processed by the macrocyclase-peptidase enzyme POPB to yield a toxic cyclic decapeptide. POPB first removes 10 residues from the N-terminus. Conformational trapping of the remaining peptide forces the enzyme to release this intermediate rather than proceed to macrocyclization. The enzyme rebinds the remaining peptide in a different conformation and catalyzes macrocyclization of the N-terminal 8 residues.

In terms of biological role, major toxin belonging to the bicyclic octapeptides amatoxins that acts by binding non-competitively to RNA polymerase II and greatly slowing the elongation of transcripts from target promoters. This Amanita fuliginea (East Asian brown death cap) protein is Alpha-amanitin proprotein.